Reading from the N-terminus, the 446-residue chain is MNGHFKIIIRDNFINNDENNYRDLHDLATNLYKLLCSKHCKISLSNLCIVKYYFDVPHINFYVSLTDGLIIYNDETYIRISHLYPEFCAMDNIIINNTNITNNTNIKMVKNKTQNPLEHFPKNQQSMNSTTNFIMSHANTLKEKTNIEPENRQKNISKNKIPKQFQNHIQKNNTFENKLEIISETLNPLNPLKSLQNSIQKQIPKQTQEQTQKQTQEQTQESSQNPHNEENYSLKIRQFRGDKLTFKYMKKDIDSGVLKPENINPMFSLKYMIFKILDSRLAIDFNSDQNIQQEYVLFNELFKECVDNNEDNKNNMDNEEDSDESDIESDSDLDDSKSQNIEIPYKYFYLPVEEKESIAKKYGLNVSEFEDKYINKSNNKIQSINQENSNTIFSESVKSDSNESKSIKPESIKSESIKSDNSNNHKNFGNTDFENNLLSLENYHTF.

3 disordered regions span residues 198 to 233 (SIQK…ENYS), 309 to 337 (NEDN…DDSK), and 394 to 431 (SESV…FGNT). The span at 199-224 (IQKQIPKQTQEQTQKQTQEQTQESSQ) shows a compositional bias: low complexity. Over residues 317–333 (DNEEDSDESDIESDSDL) the composition is skewed to acidic residues. Residues 397-418 (VKSDSNESKSIKPESIKSESIK) show a composition bias toward basic and acidic residues.

This is an uncharacterized protein from Acanthamoeba polyphaga mimivirus (APMV).